Reading from the N-terminus, the 324-residue chain is T-cell acute lymphocytic leukemia protein 1 homolog (324 aa).

The interval 1–49 is disordered; sequence MMEKLKSEQFPLSPSAEGCASPPRGDGDARGKQEGTTAETGEHRLPEEL. Positions 185 to 237 constitute a bHLH domain; that stretch reads VRRIFTNSRERWRQQNVNGAFAELRKLIPTHPPDKKLSKNEILRLAMKYINFL. Residues 276-324 are disordered; it reads SPNSSCGSLLDGDASPESFTEDQDSSVESRPSARGLHHSSLPLDGNAQR.

In terms of tissue distribution, expressed in hemopoietic and endothelial lineages. Isoform beta emerges first, expressing in the entire anterior and posterior lateral mesoderm (ALM and PLM respectively), and in the ventral wall of the dorsal aorta, where definitive hemopoiesis begins. Isoform alpha expresses later as two pairs of stripes in the PLM and ALM, and becomes restricted to the intermediate cell mass (ICM) by the 18-somite stage. The ICM is the key site of primitive hemopoiesis, giving rise to the erythroid lineage. Also expressed in all stages of endocardial cell migration and in the developing midbrain, hindbrain and spinal cord. In adults, expressed in the main hemopoietic organs, namely the kidney (where isoform alpha is the predominant isoform) and the spleen. Also expressed in the liver, gill and gonads.

Its subcellular location is the nucleus. In terms of biological role, transcription factor that plays a pivotal role in hemopoietic and endothelial development, acting synergistically with lmo2 and downstream of clo. Specifies mesodermal precursors to a hemangioblast cell fate. Hemangioblasts are bipotential precursors of blood and endothelium, and in the absence of hemopoietic induction cues such as gata1, tal1/scl-lmo2-induced hemangioblasts differentiate into endothelial cells. Isoform alpha and isoform beta are redundant for the initiation of primitive hemopoiesis but have distinct roles in the regulation of primitive erythroid differentiation and definitive hemopoietic stem cell specification, most likely due to differences in expression levels. Specification of definitive hemopoietic stem cells requires isoform beta. DNA binding is required for erythroid maturation, but not for its other hemopoietic functions. Endothelial roles include development of the dorsal aorta, the site of definitive hemopoiesis in the embryo. Required for angiogenesis but not angioblast specification. Has an additional role in endocardium formation during heart development. May play a role in central nervous system development. The polypeptide is T-cell acute lymphocytic leukemia protein 1 homolog (Danio rerio (Zebrafish)).